The chain runs to 93 residues: Large ribosomal subunit protein eL31 (93 aa).

This sequence belongs to the eukaryotic ribosomal protein eL31 family.

The polypeptide is Large ribosomal subunit protein eL31 (Methanosarcina mazei (strain ATCC BAA-159 / DSM 3647 / Goe1 / Go1 / JCM 11833 / OCM 88) (Methanosarcina frisia)).